The following is a 239-amino-acid chain: MNVENQTPNVDHQEIAKFEAIASRWWDLEGEFKPLHRINPLRLGYISQRAEGLFGKKVLDVGCGGGILAESMAREGADVTGLDMGAEPLQVARLHALESGVAVNYVQETVEAHAQAHPGLYDVVTCMEMLEHVPDPQSVVQACAKLVKPGGHVFFSTINRNAKAWMMAVIGAEYVLKMVPRGTHDIKKFIRPAELMHWVDSTPLREKHITGLHYNPLTDHFKLGPNVDVNYMLHTRHDK.

S-adenosyl-L-methionine-binding residues include Arg-42, Gly-62, Asp-83, and Met-127.

It belongs to the methyltransferase superfamily. UbiG/COQ3 family.

The catalysed reaction is a 3-demethylubiquinol + S-adenosyl-L-methionine = a ubiquinol + S-adenosyl-L-homocysteine + H(+). It carries out the reaction a 3-(all-trans-polyprenyl)benzene-1,2-diol + S-adenosyl-L-methionine = a 2-methoxy-6-(all-trans-polyprenyl)phenol + S-adenosyl-L-homocysteine + H(+). It participates in cofactor biosynthesis; ubiquinone biosynthesis. Its function is as follows. O-methyltransferase that catalyzes the 2 O-methylation steps in the ubiquinone biosynthetic pathway. This is Ubiquinone biosynthesis O-methyltransferase from Pectobacterium carotovorum subsp. carotovorum (strain PC1).